A 625-amino-acid chain; its full sequence is Threonine--tRNA ligase (625 aa).

An editing domain region spans residues 1 to 147 (MRILLIHSDY…TIVPGEAKKE (147 aa)). The segment at 206-505 (PHVKIMLEQE…MKKGKKPMYP (300 aa)) is catalytic. The Zn(2+) site is built by C298, H350, and H474.

Belongs to the class-II aminoacyl-tRNA synthetase family. As to quaternary structure, homodimer. The cofactor is Zn(2+).

It is found in the cytoplasm. It catalyses the reaction tRNA(Thr) + L-threonine + ATP = L-threonyl-tRNA(Thr) + AMP + diphosphate + H(+). Catalyzes the attachment of threonine to tRNA(Thr) in a two-step reaction: L-threonine is first activated by ATP to form Thr-AMP and then transferred to the acceptor end of tRNA(Thr). Also edits incorrectly charged L-seryl-tRNA(Thr). The chain is Threonine--tRNA ligase from Thermococcus sibiricus (strain DSM 12597 / MM 739).